Consider the following 177-residue polypeptide: UPF0251 protein Cag_0886 (177 aa).

A disordered region spans residues 147–177; it reads GGCLSDEESDEQENEQRTVGYPESEEELEIE.

Belongs to the UPF0251 family.

The polypeptide is UPF0251 protein Cag_0886 (Chlorobium chlorochromatii (strain CaD3)).